Consider the following 361-residue polypeptide: Phospho-N-acetylmuramoyl-pentapeptide-transferase (361 aa).

A run of 10 helical transmembrane segments spans residues Arg25–Ile45, Thr73–Leu93, Tyr97–Tyr117, Leu134–Leu154, Val168–Thr188, Gly200–Ala220, Ala237–Phe257, Val264–Ile284, Ile289–Val309, and Gln338–Leu358.

The protein belongs to the glycosyltransferase 4 family. MraY subfamily. Requires Mg(2+) as cofactor.

It is found in the cell inner membrane. It catalyses the reaction UDP-N-acetyl-alpha-D-muramoyl-L-alanyl-gamma-D-glutamyl-meso-2,6-diaminopimeloyl-D-alanyl-D-alanine + di-trans,octa-cis-undecaprenyl phosphate = di-trans,octa-cis-undecaprenyl diphospho-N-acetyl-alpha-D-muramoyl-L-alanyl-D-glutamyl-meso-2,6-diaminopimeloyl-D-alanyl-D-alanine + UMP. The protein operates within cell wall biogenesis; peptidoglycan biosynthesis. In terms of biological role, catalyzes the initial step of the lipid cycle reactions in the biosynthesis of the cell wall peptidoglycan: transfers peptidoglycan precursor phospho-MurNAc-pentapeptide from UDP-MurNAc-pentapeptide onto the lipid carrier undecaprenyl phosphate, yielding undecaprenyl-pyrophosphoryl-MurNAc-pentapeptide, known as lipid I. This chain is Phospho-N-acetylmuramoyl-pentapeptide-transferase, found in Nitrosospira multiformis (strain ATCC 25196 / NCIMB 11849 / C 71).